Consider the following 1342-residue polypeptide: MGYSYTEKKRIRKDFGKRPQVLNVPYLLTIQLDSFEKFIQRDPEGQQGLEAAFRSVFPIVSNNGSTELQYVSYKLGEPVFDVRECQIRGTTFAAPLRVNLRLVSYDRDAAPGTIKDIKEQDVYMGEIPLMTDNGTFVINGTERVIVSQLHRSPGVFFDSDKGKTHSSGKVLYNARIIPYRGSWLDFEFDPKDNLFARIDRRRKLPATIILRALGYSTEEILDLFFEKIQFEIQDNKLLMALVPERLRGETASFDIEANGKVYVERGRRITARHIRTLEKDNVTKIDVPTEYIVGKVSAKDYIDLESGELVCPANMEISLDILAKLAQAGYKSIETLFTNDLDFGPYISETLRVDPSSDRLSALVEIYRMMRPGEPPTKEAAEALFDNLFFSAERYDLSAVGRMKFNRSLGLAEGVGNGVLSKEDIVGVMKKLIDIRNGRGEVDDIDHLGNRRIRSVGEMAENQFRIGLVRVERAVKERLSLGDLDAVTPQDLINAKPVSAAVKEFFGSSQLSQFMDQNNPLSEVTHKRRISALGPGGLTRERAGFEVRDVHPTHYGRVCPIETPEGPNIGLINSLSVYARTNNYGFLETPYRKVVDGQVTEEIEYLSAIEEGNYVIAQANASLDEDFRFTDAFVTCRGEHGESGLYRPEEIQYMDVSPQQVVSVAAALIPFLEHDDANRALMGANMQRQAVPTLRADKPLVGTGMEKPIALDSGVAVVAKRGGIIQYVDASRIVVKVNEDETIPGEAGIDIYNLIKYTRSNQNTCINQIPCVNLGEPIGRGEVLADGPSTDLGELALGQNIRVAFMPWNGYNFEDSMLVSERVVQQDRFTTIHIQELSCVARDTKLGAEEITADIPNVGETALSKLDESGIVYVGAEVKGGDILVGKVTPKGETQLTPEEKLLRAIFGEKASDVKDSSLRVPNSVSGTVIDVQVFTRDGVEKDKRALEIEEMQLKEAKKDIAEELEILEAGLFSRVRNLLIDGGVDAKELDRLDRTKWLEQTLNDEAKQNQLEQLAEQYEELRKDFEHKLEVKRGKIIQGDDLAPGVLKVVKVYLAVKRRIQPGDKMAGRHGNKGVISKINPVEDMPYDENGQPVEIVLNPLGVPSRMNIGQILETHLGLAAKGIGEQINRMLKEKQEIEKLRGYIQKAYDLGGGSQKVDLNTFTDEEVMRLAQNLRKGMPLATPVFDGAEEKEIKDLLELGGLPTSGQITLYDGRTGEKFERPVTVGYMYMLKLNHLVDDKMHARSTGSYSLVTQQPLGGKAQFGGQRFGEMEVWALEAYGAAYTLQEMLTVKSDDVNGRTKMYKNIVSGTHQMDPGTPESFNVIMKEIRSLGINIDLDEE.

This sequence belongs to the RNA polymerase beta chain family. In terms of assembly, the RNAP catalytic core consists of 2 alpha, 1 beta, 1 beta' and 1 omega subunit. When a sigma factor is associated with the core the holoenzyme is formed, which can initiate transcription.

It carries out the reaction RNA(n) + a ribonucleoside 5'-triphosphate = RNA(n+1) + diphosphate. In terms of biological role, DNA-dependent RNA polymerase catalyzes the transcription of DNA into RNA using the four ribonucleoside triphosphates as substrates. The chain is DNA-directed RNA polymerase subunit beta from Mannheimia succiniciproducens (strain KCTC 0769BP / MBEL55E).